We begin with the raw amino-acid sequence, 363 residues long: Phosphoserine aminotransferase (363 aa).

Arginine 42 serves as a coordination point for L-glutamate. Pyridoxal 5'-phosphate is bound by residues 76-77 (AS), tryptophan 101, threonine 151, aspartate 170, and glutamine 193. Lysine 194 bears the N6-(pyridoxal phosphate)lysine mark. Residue 234–235 (NT) coordinates pyridoxal 5'-phosphate.

The protein belongs to the class-V pyridoxal-phosphate-dependent aminotransferase family. SerC subfamily. Homodimer. Pyridoxal 5'-phosphate is required as a cofactor.

It is found in the cytoplasm. The enzyme catalyses O-phospho-L-serine + 2-oxoglutarate = 3-phosphooxypyruvate + L-glutamate. It carries out the reaction 4-(phosphooxy)-L-threonine + 2-oxoglutarate = (R)-3-hydroxy-2-oxo-4-phosphooxybutanoate + L-glutamate. Its pathway is amino-acid biosynthesis; L-serine biosynthesis; L-serine from 3-phospho-D-glycerate: step 2/3. Its function is as follows. Catalyzes the reversible conversion of 3-phosphohydroxypyruvate to phosphoserine and of 3-hydroxy-2-oxo-4-phosphonooxybutanoate to phosphohydroxythreonine. The sequence is that of Phosphoserine aminotransferase from Listeria innocua serovar 6a (strain ATCC BAA-680 / CLIP 11262).